Reading from the N-terminus, the 216-residue chain is UPF0502 protein Spea_2482 (216 aa).

The protein belongs to the UPF0502 family.

The polypeptide is UPF0502 protein Spea_2482 (Shewanella pealeana (strain ATCC 700345 / ANG-SQ1)).